Reading from the N-terminus, the 183-residue chain is Adenylate kinase (183 aa).

Residue 12-17 (GAGKGT) participates in ATP binding. Residues 32–61 (STGDLLRAEVSAGSALGQEAESVMNRGELV) form an NMP region. AMP is bound by residues threonine 33, arginine 38, 59–61 (ELV), 86–89 (GFPR), and glutamine 93. An LID region spans residues 127–133 (SRGRDDD). Arginine 128 contacts ATP. Positions 130 and 141 each coordinate AMP. Position 169 (glycine 169) interacts with ATP.

The protein belongs to the adenylate kinase family. Monomer.

It localises to the cytoplasm. It carries out the reaction AMP + ATP = 2 ADP. Its pathway is purine metabolism; AMP biosynthesis via salvage pathway; AMP from ADP: step 1/1. Functionally, catalyzes the reversible transfer of the terminal phosphate group between ATP and AMP. Plays an important role in cellular energy homeostasis and in adenine nucleotide metabolism. In Synechococcus sp. (strain CC9311), this protein is Adenylate kinase.